Reading from the N-terminus, the 856-residue chain is Inactive rhomboid protein 1 (856 aa).

The segment at 1 to 21 (MGEARRDSSSSLQHKKPPWLK) is disordered. The Cytoplasmic portion of the chain corresponds to 1-412 (MGEARRDSSS…HRPFFTYWLT (412 aa)). Phosphoserine occurs at positions 76 and 176. Residues threonine 180 and threonine 183 each carry the phosphothreonine modification. Residue serine 391 is modified to Phosphoserine. A helical membrane pass occupies residues 413–433 (FVHSLVTILAVCIYGVAPVGF). The Lumenal segment spans residues 434-656 (SQHETVDSVL…NPEVPDQFYR (223 aa)). Residue asparagine 584 is glycosylated (N-linked (GlcNAc...) asparagine). Residues 657 to 677 (LWLSLFLHAGVLHCLVSVCFQ) traverse the membrane as a helical segment. Over 678-692 (MTVLRDLEKLAGWHR) the chain is Cytoplasmic. Residues 693–713 (IAIIYLLSGVTGNLASAIFLP) form a helical membrane-spanning segment. Residues 714 to 715 (YR) lie on the Lumenal side of the membrane. Residues 716 to 736 (AEVGPAGSQFGILACLFVELF) form a helical membrane-spanning segment. The Cytoplasmic portion of the chain corresponds to 737 to 747 (QSWQILARPWR). Residues 748-768 (AFFKLLAVVLFLFTFGLLPWI) form a helical membrane-spanning segment. Topologically, residues 769-773 (DNFAH) are lumenal. Residues 774 to 794 (ISGFISGLFLSFAFLPYISFG) traverse the membrane as a helical segment. At 795–804 (KFDLYRKRCQ) the chain is on the cytoplasmic side. Residues 805–825 (IIVFQLVFLGLLAGLVVLFYF) form a helical membrane-spanning segment. The Lumenal segment spans residues 826-856 (YPVRCEWCEFLTCIPFTDKFCEKYELDAQLH).

It belongs to the peptidase S54 family. In terms of assembly, homodimer, or homooligomer. Interacts with TGFA and HBEGF. Interacts with EGF; may retain EGF in the endoplasmic reticulum and regulates its degradation through the endoplasmic reticulum-associated degradation (ERAD). Interacts (via cytoplasmic N-terminus) with FRMD8/iTAP; this interaction leads to mutual protein stabilization. Interacts with ADAM17/TACE.

It is found in the endoplasmic reticulum membrane. It localises to the golgi apparatus membrane. Its function is as follows. Regulates ADAM17 protease, a sheddase of the epidermal growth factor (EGF) receptor ligands and TNF, thereby plays a role in sleep, cell survival, proliferation, migration and inflammation. Does not exhibit any protease activity on its own. In Bos taurus (Bovine), this protein is Inactive rhomboid protein 1 (RHBDF1).